The following is a 192-amino-acid chain: Ribosomal RNA small subunit methyltransferase G (192 aa).

S-adenosyl-L-methionine contacts are provided by residues G63, F68, I112–E113, and R125.

This sequence belongs to the methyltransferase superfamily. RNA methyltransferase RsmG family.

Its subcellular location is the cytoplasm. The enzyme catalyses guanosine(527) in 16S rRNA + S-adenosyl-L-methionine = N(7)-methylguanosine(527) in 16S rRNA + S-adenosyl-L-homocysteine. Its function is as follows. Specifically methylates the N7 position of guanine in position 527 of 16S rRNA. In Rickettsia felis (strain ATCC VR-1525 / URRWXCal2) (Rickettsia azadi), this protein is Ribosomal RNA small subunit methyltransferase G.